A 128-amino-acid chain; its full sequence is Large ribosomal subunit protein bL12 (128 aa).

The protein belongs to the bacterial ribosomal protein bL12 family. In terms of assembly, homodimer. Part of the ribosomal stalk of the 50S ribosomal subunit. Forms a multimeric L10(L12)X complex, where L10 forms an elongated spine to which 2 to 4 L12 dimers bind in a sequential fashion. Binds GTP-bound translation factors.

Functionally, forms part of the ribosomal stalk which helps the ribosome interact with GTP-bound translation factors. Is thus essential for accurate translation. The protein is Large ribosomal subunit protein bL12 of Desulfosudis oleivorans (strain DSM 6200 / JCM 39069 / Hxd3) (Desulfococcus oleovorans).